The primary structure comprises 320 residues: Acetyl-coenzyme A carboxylase carboxyl transferase subunit alpha (320 aa).

A CoA carboxyltransferase C-terminal domain is found at 33–294 (AFDGEIESLR…GDAVEEELKA (262 aa)).

This sequence belongs to the AccA family. Acetyl-CoA carboxylase is a heterohexamer composed of biotin carboxyl carrier protein (AccB), biotin carboxylase (AccC) and two subunits each of ACCase subunit alpha (AccA) and ACCase subunit beta (AccD).

It is found in the cytoplasm. It carries out the reaction N(6)-carboxybiotinyl-L-lysyl-[protein] + acetyl-CoA = N(6)-biotinyl-L-lysyl-[protein] + malonyl-CoA. The protein operates within lipid metabolism; malonyl-CoA biosynthesis; malonyl-CoA from acetyl-CoA: step 1/1. In terms of biological role, component of the acetyl coenzyme A carboxylase (ACC) complex. First, biotin carboxylase catalyzes the carboxylation of biotin on its carrier protein (BCCP) and then the CO(2) group is transferred by the carboxyltransferase to acetyl-CoA to form malonyl-CoA. In Phenylobacterium zucineum (strain HLK1), this protein is Acetyl-coenzyme A carboxylase carboxyl transferase subunit alpha.